A 902-amino-acid polypeptide reads, in one-letter code: Nuclear factor of activated T-cells, cytoplasmic 4 (902 aa).

Disordered regions lie at residues 16-180 (VFGE…SSWS) and 208-369 (RFGL…GGSR). Pro residues predominate over residues 50–81 (EPPPYGAAPIGIPRPPPPRPGMHSPPPRPAPS). The span at 96–109 (GGPGGGAGGAGGGR) shows a compositional bias: gly residues. The tract at residues 114 to 119 (PSIRIT) is calcineurin-binding. Over residues 151-165 (GFGGYREAGGQGGGA) the composition is skewed to gly residues. Residues 166–180 (FFSPSPGSSSLSSWS) are compositionally biased toward low complexity. Phosphoserine; by MAPK7 and MAPK14 occurs at positions 168 and 170. Phosphoserine; by MAPK8 and MAPK9 occurs at positions 213 and 217. An SP 1 repeat occupies 213 to 229 (SPLPSPRASPRPWTPED). Residues 213–293 (SPLPSPRASP…LSRRGSLGEE (81 aa)) form a 2 approximate SP repeats region. Composition is skewed to pro residues over residues 215–227 (LPSP…PWTP) and 254–263 (GPTPASPRPA). The short motif at 268–270 (KRR) is the Nuclear localization signal element. The span at 272–288 (SSSGTPSSASPALSRRG) shows a compositional bias: low complexity. Residues 277-293 (PSSASPALSRRGSLGEE) form an SP 2; approximate repeat. Serine 289 and serine 344 each carry phosphoserine; by RPS6KA3. The RHD domain occupies 401 to 582 (SALPPLDWPL…VPIECSQRSA (182 aa)). A DNA-binding region spans residues 430-437 (RAHYETEG). In terms of domain architecture, IPT/TIG spans 586–683 (PQVEAYSPSA…KRSPTQSFRF (98 aa)). Residues 672–674 (RRK) carry the Nuclear localization signal motif. Lysine 689 participates in a covalent cross-link: Glycyl lysine isopeptide (Lys-Gly) (interchain with G-Cter in SUMO2). The segment at 791-870 (PYGGRGSSFS…GGYSSGFRDS (80 aa)) is disordered. The span at 805-824 (FSPPAPFRPPPLPASPPLEG) shows a compositional bias: pro residues.

As to quaternary structure, member of the multicomponent NFATC transcription complex that consists of at least two components, a pre-existing cytoplasmic component NFATC2 and an inducible nuclear component NFATC1. Other NFAT proteins, such as NFATC3, or members of the activating protein-1 (AP-1) family and MAF can also bind the complex. NFAT proteins can bind DNA as monomers or dimers. Component of a promoter-binding complex composed of STAT3, NFATC3 and NFATC4; complex formation is enhanced by calcineurin. Interacts with CREBBP; this interaction potentiates transcription activation. Interacts with MAPK8/JNK1 and MAPK9/JNK2. Interacts with GATA4 (via the second Zn finger). Interacts (via N-terminus) with IRAK1 (via C-terminus). Interacts with RPS6KA3. Interacts with HOMER1, HOMER2 and HOMER3; this interaction competes with calcineurin/PPP3CA-binding and hence prevents NFATC4 dephosphorylation and activation. Interacts with ESR1 and ESR2; this interaction decreases NFATC4 transcriptional activity. Interacts with MTOR and MAPK7/ERK5. Interacts with TRIM17; this interaction prevents NFATC3 nuclear localization. Interacts with TCF25 (via C-terminus); the interaction leads to suppression of NFATC4 transcription factor activity and is reduced following stimulation with angiotensin-2. Phosphorylated by NFATC-kinases; dephosphorylated by calcineurin/PPP3CA. Phosphorylated on Ser-168 and Ser-170 by MTOR, IRAK1, MAPK7/ERK5 and MAPK14/p38, on Ser-213 and Ser-217 by MAPK8/JNK1 and MAPK9/JNK2, and on Ser-289 and Ser-344 by RPS6KA3. Phosphorylated by GSK3B. Phosphorylation by GSK3B markedly increases NFATC4 ubiquitination. Phosphorylation at Ser-168 and Ser-170 is stimulated by UV irradiation. Phosphorylation determines subcellular location: the hyperphosphorylated protein is cytosolic, while the dephosphorylated form is targeted to the nucleus. Post-translationally, ubiquitinated, leading to degradation by the proteasome. Ubiquitination may be stimulated by GSK3B-dependent phosphorylation. Polyubiquitin linkage mainly occurs through 'Lys-48'. In terms of tissue distribution, widely expressed, with high levels in placenta, lung, kidney, testis and ovary. Weakly expressed in spleen and thymus. In the hippocampus, expressed in the granular layer of the dentate gyrus, in the pyramidal neurons of CA3 region, and in the hippocampal fissure. Expressed in the heart (at protein level).

It is found in the cytoplasm. The protein resides in the nucleus. With respect to regulation, transcriptional activity may be repressed by ESR1 and ESR2. Its function is as follows. Ca(2+)-regulated transcription factor that is involved in several processes, including the development and function of the immune, cardiovascular, musculoskeletal, and nervous systems. Involved in T-cell activation, stimulating the transcription of cytokine genes, including that of IL2 and IL4. Along with NFATC3, involved in embryonic heart development. Following JAK/STAT signaling activation and as part of a complex with NFATC3 and STAT3, binds to the alpha-beta E4 promoter region of CRYAB and activates transcription in cardiomyocytes. Involved in mitochondrial energy metabolism required for cardiac morphogenesis and function. Transactivates many genes involved in the cardiovascular system, including AGTR2, NPPB/BNP (in synergy with GATA4), NPPA/ANP/ANF and MYH7/beta-MHC. Involved in the regulation of adult hippocampal neurogenesis. Involved in BDNF-driven pro-survival signaling in hippocampal adult-born neurons. Involved in the formation of long-term spatial memory and long-term potentiation. In cochlear nucleus neurons, may play a role in deafferentation-induced apoptosis during the developmental critical period, when auditory neurons depend on afferent input for survival. Binds to and activates the BACE1/Beta-secretase 1 promoter, hence may regulate the proteolytic processing of the amyloid precursor protein (APP). Plays a role in adipocyte differentiation. May be involved in myoblast differentiation into myotubes. Binds the consensus DNA sequence 5'-GGAAAAT-3'. In the presence of CREBBP, activates TNF transcription. Binds to PPARG gene promoter and regulates its activity. Binds to PPARG and REG3G gene promoters. This chain is Nuclear factor of activated T-cells, cytoplasmic 4 (NFATC4), found in Homo sapiens (Human).